The chain runs to 289 residues: ATP synthase gamma chain (289 aa).

Belongs to the ATPase gamma chain family. F-type ATPases have 2 components, CF(1) - the catalytic core - and CF(0) - the membrane proton channel. CF(1) has five subunits: alpha(3), beta(3), gamma(1), delta(1), epsilon(1). CF(0) has three main subunits: a, b and c.

Its subcellular location is the cell inner membrane. In terms of biological role, produces ATP from ADP in the presence of a proton gradient across the membrane. The gamma chain is believed to be important in regulating ATPase activity and the flow of protons through the CF(0) complex. The protein is ATP synthase gamma chain of Haemophilus influenzae (strain 86-028NP).